The primary structure comprises 171 residues: Shikimate kinase (171 aa).

Position 13–18 (13–18 (GVGKST)) interacts with ATP. Ser17 contributes to the Mg(2+) binding site. 3 residues coordinate substrate: Asp35, Arg59, and Gly81. ATP is bound at residue Arg118. Arg136 provides a ligand contact to substrate. Position 153 (Arg153) interacts with ATP.

Belongs to the shikimate kinase family. As to quaternary structure, monomer. Mg(2+) is required as a cofactor.

It is found in the cytoplasm. The catalysed reaction is shikimate + ATP = 3-phosphoshikimate + ADP + H(+). Its pathway is metabolic intermediate biosynthesis; chorismate biosynthesis; chorismate from D-erythrose 4-phosphate and phosphoenolpyruvate: step 5/7. Its function is as follows. Catalyzes the specific phosphorylation of the 3-hydroxyl group of shikimic acid using ATP as a cosubstrate. The protein is Shikimate kinase of Streptomyces coelicolor (strain ATCC BAA-471 / A3(2) / M145).